A 168-amino-acid polypeptide reads, in one-letter code: Large ribosomal subunit protein uL11 (168 aa).

This sequence belongs to the universal ribosomal protein uL11 family. As to quaternary structure, part of the ribosomal stalk of the 50S ribosomal subunit. Interacts with L10 and the large rRNA to form the base of the stalk. L10 forms an elongated spine to which L12 dimers bind in a sequential fashion forming a multimeric L10(L12)X complex.

Functionally, forms part of the ribosomal stalk which helps the ribosome interact with GTP-bound translation factors. This Metallosphaera sedula (strain ATCC 51363 / DSM 5348 / JCM 9185 / NBRC 15509 / TH2) protein is Large ribosomal subunit protein uL11.